The chain runs to 134 residues: GSH-induced LITAF domain protein (134 aa).

Residues 33–113 (DPLGAPIQQT…CGNKVADFEK (81 aa)) form the LITAF domain. Residues Cys53 and Cys56 each contribute to the Zn(2+) site. A membrane-binding amphipathic helix region spans residues 68 to 88 (PGVAAVVACMMPFMLGFCFLC). Zn(2+) is bound by residues Cys101 and Cys104.

Belongs to the CDIP1/LITAF family. In terms of assembly, interacts (via N- and C-terminal) with MIEL1 and LSD1 (via N-terminus).

The protein resides in the cell membrane. In terms of biological role, acts as a membrane anchor, bringing other regulators of programmed cell death (PCD) to the plasma membrane. Negatively regulates hypersensitive cell death. The protein is GSH-induced LITAF domain protein of Arabidopsis thaliana (Mouse-ear cress).